Consider the following 428-residue polypeptide: Small ribosomal subunit protein uS2m (428 aa).

The disordered stretch occupies residues 30-50 (FLSQDNFTAPPPPPTNSKKQA).

This sequence belongs to the universal ribosomal protein uS2 family. As to quaternary structure, component of the mitochondrial small ribosomal subunit (mt-SSU). Mature N.crassa 74S mitochondrial ribosomes consist of a small (37S) and a large (54S) subunit. The 37S small subunit contains a 16S ribosomal RNA (16S mt-rRNA) and 32 different proteins. The 54S large subunit contains a 23S rRNA (23S mt-rRNA) and 42 different proteins.

Its subcellular location is the mitochondrion. Component of the mitochondrial ribosome (mitoribosome), a dedicated translation machinery responsible for the synthesis of mitochondrial genome-encoded proteins, including at least some of the essential transmembrane subunits of the mitochondrial respiratory chain. The mitoribosomes are attached to the mitochondrial inner membrane and translation products are cotranslationally integrated into the membrane. The protein is Small ribosomal subunit protein uS2m (mrp4) of Neurospora crassa (strain ATCC 24698 / 74-OR23-1A / CBS 708.71 / DSM 1257 / FGSC 987).